Consider the following 646-residue polypeptide: Major capsid protein (646 aa).

The protein belongs to the NCLDV major capsid protein family. In terms of assembly, homotrimer. The membrane-bound form, but not the cytosolic one, assembles into large complexes. Interacts with the minor capsid proteins M1249L and p17; these interactions form a rigid zipper structure that stabilizes the capsomers.

It localises to the virion. The protein localises to the host endoplasmic reticulum membrane. Its subcellular location is the host cytoplasm. The protein resides in the host cytosol. Its function is as follows. Capsid protein that self-assembles to form the pseudo-hexameric capsomers of the icosahedral capsid. The capsid is constructed of 2760 pseudo-hexameric capsomers and 12 pentameric capsomers, with a T=277 symmetry, about 200 nm in diameter. The capsid encapsulates the DNA-containing nucleoid, the core shell and the inner membrane. Plays an essential role in virion assembly. Involved in virus attachment to the host cell. The polypeptide is Major capsid protein (Ornithodoros (relapsing fever ticks)).